The primary structure comprises 476 residues: Casein kinase 1-like protein 7 (476 aa).

Residues 9 to 278 (FKLGKKIGSG…LKRLFRDLFI (270 aa)) form the Protein kinase domain. ATP contacts are provided by residues 15–23 (IGSGSFGEL) and K38. The active-site Proton acceptor is D128. Disordered stretches follow at residues 299-324 (GSSSGSSSRTRHHTTAKPGFNADPIE) and 340-464 (PGAV…TRED). Positions 357 to 367 (PRDRSRSRNSD) are enriched in basic and acidic residues. Low complexity predominate over residues 382–422 (ANSSSRYRASSSRKAVAASSSRPSSAGGPSESRTSSRLVSS). The span at 423–432 (SGGGGSGSGN) shows a compositional bias: gly residues.

This sequence belongs to the protein kinase superfamily. CK1 Ser/Thr protein kinase family. Casein kinase I subfamily. In terms of assembly, monomer. Post-translationally, autophosphorylated.

The protein localises to the cytoplasm. It carries out the reaction L-seryl-[protein] + ATP = O-phospho-L-seryl-[protein] + ADP + H(+). It catalyses the reaction L-threonyl-[protein] + ATP = O-phospho-L-threonyl-[protein] + ADP + H(+). Functionally, casein kinases are operationally defined by their preferential utilization of acidic proteins such as caseins as substrates. It can phosphorylate a large number of proteins. This chain is Casein kinase 1-like protein 7, found in Arabidopsis thaliana (Mouse-ear cress).